A 403-amino-acid chain; its full sequence is Phosphoglycerate kinase (403 aa).

Substrate-binding positions include 21-23 (DFN), Arg36, 59-62 (HLGR), Arg119, and Arg159. ATP is bound by residues Lys214, Gly301, Glu332, and 359–362 (GGDS).

Belongs to the phosphoglycerate kinase family. As to quaternary structure, monomer.

The protein localises to the cytoplasm. It catalyses the reaction (2R)-3-phosphoglycerate + ATP = (2R)-3-phospho-glyceroyl phosphate + ADP. It functions in the pathway carbohydrate degradation; glycolysis; pyruvate from D-glyceraldehyde 3-phosphate: step 2/5. The protein is Phosphoglycerate kinase of Lactobacillus delbrueckii subsp. lactis.